Reading from the N-terminus, the 335-residue chain is Leukocyte cell-derived chemotaxin 1 (335 aa).

A helical membrane pass occupies residues 45–65 (VVLISGAVLLLLGAIGAFYFW). The region spanning 104 to 201 (GSGAEEAVEV…LCGDLPIFWL (98 aa)) is the BRICHOS domain. A disulfide bridge links Cys-131 with Cys-193. Residues 211–214 (RERR) constitute a propeptide that is removed on maturation. Residues 221–269 (VTTTTTRRLRSGPQGTPAPGRPNNGTRPSVQEDAEPFNPDNPYHQQEGE) are disordered. Thr-223 carries N-linked (GlcNAc...) asparagine; in variant 223-N-E-224 glycosylation. A glycan (O-linked (GalNAc...) threonine; partial) is linked at Thr-236. A glycan (N-linked (GlcNAc...) asparagine) is linked at Asn-244. 4 disulfide bridges follow: Cys-283–Cys-287, Cys-284–Cys-324, Cys-294–Cys-318, and Cys-298–Cys-314.

Belongs to the chondromodulin-1 family. After cleavage, the post-translationally modified ChM-I is secreted as a glycoprotein. Post-translationally, two other smaller nonglycosylated chondromodulin forms (9 kDa and 7 kDa) are found either in developing articular cartilage or in chondrocytes. The 9 kDa form could be processed by an extracellular matrix-associated protease as a metalloproteinase and the 7 kDa form could be processed intracellularly. As to expression, nasal and articular cartilage, and fetal epiphysis.

It is found in the secreted. The protein resides in the extracellular space. The protein localises to the extracellular matrix. It localises to the endomembrane system. Its function is as follows. Bifunctional growth regulator that stimulates the growth of cultured chondrocytes in the presence of basic fibroblast growth factor (FGF) but inhibits the growth of cultured vascular endothelial cells. May contribute to the rapid growth of cartilage and vascular invasion prior to the replacement of cartilage by bone during endochondral bone development. Inhibits in vitro tube formation and mobilization of endothelial cells. Plays a role as antiangiogenic factor in cardiac valves to suppress neovascularization. The protein is Leukocyte cell-derived chemotaxin 1 of Bos taurus (Bovine).